The following is a 349-amino-acid chain: 4-hydroxythreonine-4-phosphate dehydrogenase (349 aa).

Substrate-binding residues include His141 and Thr142. 3 residues coordinate a divalent metal cation: His176, His221, and His276. Lys284, Asn293, and Arg302 together coordinate substrate.

This sequence belongs to the PdxA family. Homodimer. Zn(2+) serves as cofactor. The cofactor is Mg(2+). Co(2+) is required as a cofactor.

It localises to the cytoplasm. It carries out the reaction 4-(phosphooxy)-L-threonine + NAD(+) = 3-amino-2-oxopropyl phosphate + CO2 + NADH. The protein operates within cofactor biosynthesis; pyridoxine 5'-phosphate biosynthesis; pyridoxine 5'-phosphate from D-erythrose 4-phosphate: step 4/5. In terms of biological role, catalyzes the NAD(P)-dependent oxidation of 4-(phosphooxy)-L-threonine (HTP) into 2-amino-3-oxo-4-(phosphooxy)butyric acid which spontaneously decarboxylates to form 3-amino-2-oxopropyl phosphate (AHAP). The polypeptide is 4-hydroxythreonine-4-phosphate dehydrogenase (Methylorubrum populi (strain ATCC BAA-705 / NCIMB 13946 / BJ001) (Methylobacterium populi)).